The chain runs to 109 residues: Mitochondrial pyruvate carrier 1 (109 aa).

At alanine 2 the chain carries N-acetylalanine. Residues 2–20 (AGALVRKAADYVRSKDFRD) are Mitochondrial matrix-facing. A helical membrane pass occupies residues 21–41 (YLMSTHFWGPVANWGLPIAAI). At 42 to 52 (NDMKKSPEIIS) the chain is on the mitochondrial intermembrane side. A helical transmembrane segment spans residues 53–71 (GRMTFALCCYSLTFMRFAY). Lysine 72 carries the N6-acetyllysine modification. Residues 72-109 (KVQPRNWLLFACHVTNEVAQLIQGGRLINYEMSKRPSA) lie on the Mitochondrial matrix side of the membrane.

This sequence belongs to the mitochondrial pyruvate carrier (MPC) (TC 2.A.105) family. Homodimer. Forms heterodimer with MPC2. The heterodimer is the more stable and dominant form.

Its subcellular location is the mitochondrion inner membrane. It carries out the reaction pyruvate(out) + H(+)(out) = pyruvate(in) + H(+)(in). In terms of biological role, mediates the uptake of pyruvate into mitochondria. The chain is Mitochondrial pyruvate carrier 1 (Mpc1) from Mus musculus (Mouse).